The chain runs to 325 residues: Protein TMED8 (325 aa).

The disordered stretch occupies residues 1–78; sequence MSDLQAAEGP…MVSPVSKDAT (78 aa). In terms of domain architecture, GOLD spans 159–323; sequence PPCIWTFAKV…NKTLYFHIYY (165 aa). Lys-169 is subject to N6-acetyllysine. The segment at 232-267 is disordered; sequence TVQVSDSSDDEDEEEEEEEEIEEPVPAGDVERGSRS. The segment covering 238-254 has biased composition (acidic residues); that stretch reads SSDDEDEEEEEEEEIEE.

The sequence is that of Protein TMED8 (TMED8) from Homo sapiens (Human).